The following is a 240-amino-acid chain: Ribonuclease PH (240 aa).

Residues Arg-86 and 124–126 each bind phosphate; that span reads GTR.

It belongs to the RNase PH family. Homohexameric ring arranged as a trimer of dimers.

It catalyses the reaction tRNA(n+1) + phosphate = tRNA(n) + a ribonucleoside 5'-diphosphate. In terms of biological role, phosphorolytic 3'-5' exoribonuclease that plays an important role in tRNA 3'-end maturation. Removes nucleotide residues following the 3'-CCA terminus of tRNAs; can also add nucleotides to the ends of RNA molecules by using nucleoside diphosphates as substrates, but this may not be physiologically important. Probably plays a role in initiation of 16S rRNA degradation (leading to ribosome degradation) during starvation. This chain is Ribonuclease PH, found in Rickettsia prowazekii (strain Madrid E).